Consider the following 1076-residue polypeptide: Bifunctional glutamine synthetase adenylyltransferase/adenylyl-removing enzyme (1076 aa).

The interval 1-521 is adenylyl removase; sequence MESSIFKPSS…LHLDIYYRPM (521 aa). An adenylyl transferase region spans residues 524-1076; the sequence is VNAQMENDQI…LERNRRRAQR (553 aa). Over residues 1042 to 1056 the composition is skewed to low complexity; sequence TATASAATQQPQTAP. Residues 1042–1076 are disordered; the sequence is TATASAATQQPQTAPRPRMHVIAPRLERNRRRAQR.

The protein belongs to the GlnE family. It depends on Mg(2+) as a cofactor.

The enzyme catalyses [glutamine synthetase]-O(4)-(5'-adenylyl)-L-tyrosine + phosphate = [glutamine synthetase]-L-tyrosine + ADP. It carries out the reaction [glutamine synthetase]-L-tyrosine + ATP = [glutamine synthetase]-O(4)-(5'-adenylyl)-L-tyrosine + diphosphate. Involved in the regulation of glutamine synthetase GlnA, a key enzyme in the process to assimilate ammonia. When cellular nitrogen levels are high, the C-terminal adenylyl transferase (AT) inactivates GlnA by covalent transfer of an adenylyl group from ATP to specific tyrosine residue of GlnA, thus reducing its activity. Conversely, when nitrogen levels are low, the N-terminal adenylyl removase (AR) activates GlnA by removing the adenylyl group by phosphorolysis, increasing its activity. The regulatory region of GlnE binds the signal transduction protein PII (GlnB) which indicates the nitrogen status of the cell. The sequence is that of Bifunctional glutamine synthetase adenylyltransferase/adenylyl-removing enzyme from Bifidobacterium longum (strain DJO10A).